The sequence spans 100 residues: Ubiquitin-related modifier 1 homolog (100 aa).

Gly100 bears the 1-thioglycine mark. Gly100 is covalently cross-linked (Glycyl lysine isopeptide (Gly-Lys) (interchain with K-? in acceptor proteins)).

Belongs to the URM1 family. In terms of processing, C-terminal thiocarboxylation occurs in 2 steps, it is first acyl-adenylated (-COAMP) via the hesA/moeB/thiF part of the MOCS3 homolog, then thiocarboxylated (-COSH) via the rhodanese domain of the MOCS3 homolog.

It is found in the cytoplasm. The protein operates within tRNA modification; 5-methoxycarbonylmethyl-2-thiouridine-tRNA biosynthesis. In terms of biological role, acts as a sulfur carrier required for 2-thiolation of mcm(5)S(2)U at tRNA wobble positions of cytosolic tRNA(Lys), tRNA(Glu) and tRNA(Gln). Serves as sulfur donor in tRNA 2-thiolation reaction by being thiocarboxylated (-COSH) at its C-terminus by MOCS3. The sulfur is then transferred to tRNA to form 2-thiolation of mcm(5)S(2)U. Also acts as a ubiquitin-like protein (UBL) that is covalently conjugated via an isopeptide bond to lysine residues of target proteins. The thiocarboxylated form serves as substrate for conjugation and oxidative stress specifically induces the formation of UBL-protein conjugates. This is Ubiquitin-related modifier 1 homolog from Oryza sativa subsp. japonica (Rice).